The sequence spans 169 residues: Putative prolyl-tRNA synthetase associated domain-containing protein 1 (169 aa).

Belongs to the PRORSD1 family.

This Homo sapiens (Human) protein is Putative prolyl-tRNA synthetase associated domain-containing protein 1 (PRORSD1P).